Consider the following 374-residue polypeptide: ORC1-type DNA replication protein 6 (374 aa).

Residues 66-70, Tyr-209, and Arg-221 contribute to the ATP site; that span reads TGKTT.

Belongs to the CDC6/cdc18 family.

In terms of biological role, involved in regulation of DNA replication. In Halobacterium salinarum (strain ATCC 700922 / JCM 11081 / NRC-1) (Halobacterium halobium), this protein is ORC1-type DNA replication protein 6 (orc6).